A 461-amino-acid chain; its full sequence is Ribosomal protein uS12 methylthiotransferase RimO (461 aa).

The MTTase N-terminal domain maps to 9-124 (PRIGMVSLGC…VMDAVHLNLP (116 aa)). [4Fe-4S] cluster-binding residues include C18, C54, C83, C159, C163, and C166. A Radical SAM core domain is found at 145 to 387 (LTPRHYAYLK…AVAEAVSSQK (243 aa)). The TRAM domain occupies 389-461 (QQRVGATMQV…QGHDLIAVPV (73 aa)).

Belongs to the methylthiotransferase family. RimO subfamily. [4Fe-4S] cluster serves as cofactor.

The protein resides in the cytoplasm. It carries out the reaction L-aspartate(89)-[ribosomal protein uS12]-hydrogen + (sulfur carrier)-SH + AH2 + 2 S-adenosyl-L-methionine = 3-methylsulfanyl-L-aspartate(89)-[ribosomal protein uS12]-hydrogen + (sulfur carrier)-H + 5'-deoxyadenosine + L-methionine + A + S-adenosyl-L-homocysteine + 2 H(+). Catalyzes the methylthiolation of an aspartic acid residue of ribosomal protein uS12. This Polaromonas naphthalenivorans (strain CJ2) protein is Ribosomal protein uS12 methylthiotransferase RimO.